Here is a 151-residue protein sequence, read N- to C-terminus: Transcription factor ATOH7 (151 aa).

A bHLH domain is found at 39-91 (KRRLAANARERRRMQGLNTAFDRLRKVVPQWGQDKKLSKYETLQMALSYIMAL).

The protein localises to the nucleus. It localises to the perikaryon. It is found in the cell projection. The protein resides in the axon. Its function is as follows. Transcription factor that binds to DNA at the consensus sequence 5'-CAG[GC]TG-3'. Positively regulates the determination of retinal ganglion cell fate and formation of the optic nerve and retino-hypothalamic tract. Required for retinal circadian rhythm photoentrainment. Plays a role in brainstem auditory signaling and binaural processing. During retinal neurogenesis, activates its own transcription, as well as the transcription of CHRNB3 and BRN3. This chain is Transcription factor ATOH7, found in Gallus gallus (Chicken).